Consider the following 1043-residue polypeptide: Unconventional myosin-Ia (1043 aa).

One can recognise a Myosin motor domain in the interval 8–694; that stretch reads VGVEDLVLLE…TLFYLEEQRR (687 aa). 101–108 serves as a coordination point for ATP; sequence GESGAGKT. The interval 571-593 is actin-binding; it reads VTTLMKNLYSKNPNYIRCIKPNE. 3 consecutive IQ domains span residues 697-719, 720-742, and 743-772; these read LQQLATLIQKTYRGWRCRTHYQL, MRKSQIVISSWFRGNMQKKHYRK, and MKASALLIQAFVRGWKARKNYRKYFRSGAA. The 185-residue stretch at 858-1042 folds into the TH1 domain; sequence KASYPQSVPI…KGSRCLEVTV (185 aa).

Belongs to the TRAFAC class myosin-kinesin ATPase superfamily. Myosin family. In terms of processing, phosphorylated by ALPK1.

Functionally, involved in directing the movement of organelles along actin filaments. The polypeptide is Unconventional myosin-Ia (MYO1A) (Bos taurus (Bovine)).